The following is a 268-amino-acid chain: Sterol uptake protein 2 (268 aa).

It belongs to the SUT1 family.

It localises to the nucleus. In terms of biological role, putative transcription factor involved in the regulation of the activity of the cAMP/protein kinase A pathway. Involved in sterol uptake. With SUT1, positively regulates mating by repressing the expression of the mating inhibitors NCE102, PRR2 and RHO5 in response to pheromone. The chain is Sterol uptake protein 2 from Saccharomyces cerevisiae (strain ATCC 204508 / S288c) (Baker's yeast).